The chain runs to 510 residues: Maturase K (510 aa).

This sequence belongs to the intron maturase 2 family. MatK subfamily.

The protein localises to the plastid. Its subcellular location is the chloroplast. Functionally, usually encoded in the trnK tRNA gene intron. Probably assists in splicing its own and other chloroplast group II introns. This Penstemon heterophyllus (Foothill penstemon) protein is Maturase K.